Consider the following 322-residue polypeptide: ATP-dependent 6-phosphofructokinase (322 aa).

ATP is bound by residues Gly12, 73–74 (RF), and 103–106 (GDGT). Asp104 serves as a coordination point for Mg(2+). A substrate-binding site is contributed by 126–128 (TID). Asp128 functions as the Proton acceptor in the catalytic mechanism. Arg155 is an ADP binding site. Residues Arg163 and 170–172 (MGR) each bind substrate. Residues 186-188 (GSE), Lys212, and 214-216 (KPS) contribute to the ADP site. Residues Glu223, Arg245, and 251 to 254 (HTQR) contribute to the substrate site.

The protein belongs to the phosphofructokinase type A (PFKA) family. ATP-dependent PFK group I subfamily. Prokaryotic clade 'B1' sub-subfamily. As to quaternary structure, homotetramer. Mg(2+) serves as cofactor.

The protein localises to the cytoplasm. The catalysed reaction is beta-D-fructose 6-phosphate + ATP = beta-D-fructose 1,6-bisphosphate + ADP + H(+). Its pathway is carbohydrate degradation; glycolysis; D-glyceraldehyde 3-phosphate and glycerone phosphate from D-glucose: step 3/4. With respect to regulation, allosterically activated by ADP and other diphosphonucleosides, and allosterically inhibited by phosphoenolpyruvate. Catalyzes the phosphorylation of D-fructose 6-phosphate to fructose 1,6-bisphosphate by ATP, the first committing step of glycolysis. This chain is ATP-dependent 6-phosphofructokinase, found in Mesomycoplasma hyopneumoniae (strain 232) (Mycoplasma hyopneumoniae).